The primary structure comprises 429 residues: Prenyltransferase okaC (429 aa).

Arginine 101, lysine 189, tyrosine 191, lysine 257, tyrosine 259, tyrosine 342, tyrosine 406, and tyrosine 410 together coordinate dimethylallyl diphosphate.

The protein belongs to the tryptophan dimethylallyltransferase family.

It carries out the reaction cyclo(L-Trp-L-Trp) + 2 dimethylallyl diphosphate = cyclo(N(8)-(alpha,alpha-dimethylallyl)-L-Trp-6a-(alpha,alpha-dimethylallyl)-L-Trp) + 2 diphosphate. Its pathway is alkaloid biosynthesis. In terms of biological role, prenyltransferase; part of the gene cluster that mediates the biosynthesis of okaramine B, a prenylated indole alkaloid that possesses an unusual octacyclic ring system, including a four-membered azetidine ring and an eight-membered azocine ring, and that exhibits insecticidal activity against silkworm larvae. Within the pathway, okaC performs asymmetric reverse prenylation of cyclo(L-Trp-L-Trp) at N-1 and C-2' of the indole ring to produce the cyclic prenylated tryptophan dimer cyclo(N8-(alpha,alpha-dimethylallyl)-L-Trp-6a-(alpha,alpha-dime-thylallyl)-L-Trp). The biosynthesis begins with the NRPS okaA that condenses two tryptophan molecules into cyclo(L-Trp-L-Trp). Prenylation by the prenyltransferase okaC then leads to the formation of cyclo(N8-(alpha,alpha-dimethylallyl)-L-Trp-6a-(alpha,alpha-dime-thylallyl)-L-Trp). This is followed by indole 2,3-epoxidation by the FAD-dependent monooxygenase okaB to facilitate the formation of the hexahydropyrrolo[2,3-b]indole (HPI) moiety of okaramine C. The cytochrome P450 monooxygenase okaD then likely catalyzes formation of the eight-membered ring of okaramine A. The dioxygenase okaE further forms the unusual 2-dimethyl-3-methyl-azetidine ring to yield 12-deshydroxyl okaramine E, as well as the hydroxylation of 12-deshydroxyl okaramine E to produce okaramine E. The cytochrome P450 monoxygenase okaG converts 12-deshydroxyl okaramine E into 3-desmethyl okaramine B which is further methylated by the methyltransferase okaF into okaramine B. In a shunt pathway, okaG and okaF together are also able to convert okaramine E into okaramine D. Okaramine H is produced by nonenzymatic conversion from okaramine A. The chain is Prenyltransferase okaC from Penicillium ochrochloron.